We begin with the raw amino-acid sequence, 950 residues long: A disintegrin and metalloproteinase with thrombospondin motifs 15 (950 aa).

Residues 1–17 (MLLLGILTLAFAGRTAG) form the signal peptide. Positions 18-212 (GSEPEREVVV…SRRRSGRAKR (195 aa)) are excised as a propeptide. N141 is a glycosylation site (N-linked (GlcNAc...) asparagine). Residues 151–172 (SQGAHLLQRRGVPGGPSGDPTS) are disordered. The Cysteine switch motif lies at 172-179 (SRCGVASG). C174 provides a ligand contact to Zn(2+). The Peptidase M12B domain occupies 218–427 (RYVETLVVAD…GHGDCLLDQP (210 aa)). 11 disulfide bridges follow: C293/C345, C322/C327, C339/C422, C377/C406, C448/C470, C459/C480, C465/C499, C493/C504, C528/C565, C532/C570, and C543/C555. H361 is a binding site for Zn(2+). Residue E362 is part of the active site. The Zn(2+) site is built by H365 and H371. The Disintegrin domain maps to 428–515 (SKPISLPEDL…ERHNLNKHRV (88 aa)). Residues 516-571 (DGSWAKWDPYGPCSRTCGGGVQLARRQCTNPTPANGGKYCEGVRVKYRSCNLEPCP) enclose the TSP type-1 1 domain. Residues N591, N623, and N679 are each glycosylated (N-linked (GlcNAc...) asparagine). A spacer region spans residues 701–838 (AIPAGASSID…SNQVEQPDDR (138 aa)). Positions 798–822 (FYLPKEPREDKSSHPKDPRGPSVLH) are disordered. Residues 802–816 (KEPREDKSSHPKDPR) are compositionally biased toward basic and acidic residues. TSP type-1 domains follow at residues 839–895 (PPAR…EPCP) and 896–949 (TWEL…VLRP).

Zn(2+) is required as a cofactor. In terms of processing, the precursor is cleaved by a furin endopeptidase. Post-translationally, glycosylated. Can be O-fucosylated by POFUT2 on a serine or a threonine residue found within the consensus sequence C1-X(2)-(S/T)-C2-G of the TSP type-1 repeat domains where C1 and C2 are the first and second cysteine residue of the repeat, respectively. Fucosylated repeats can then be further glycosylated by the addition of a beta-1,3-glucose residue by the glucosyltransferase, B3GALTL. Fucosylation mediates the efficient secretion of ADAMTS family members. Can be C-glycosylated with one or two mannose molecules on tryptophan residues within the consensus sequence W-X-X-W of the TPRs. Also N-glycosylated. These other glycosylations can also facilitate secretion. As to expression, expressed in fetal liver and kidney, but not in any of the adult tissues examined.

Its subcellular location is the secreted. The protein localises to the extracellular space. It is found in the extracellular matrix. The protein resides in the cell surface. Functionally, metalloprotease which has proteolytic activity against the proteoglycan VCAN, cleaving it at the 'Glu-1428-|-1429-Ala' site. Cleaves VCAN in the pericellular matrix surrounding myoblasts, facilitating myoblast contact and fusion which is required for skeletal muscle development and regeneration. In Homo sapiens (Human), this protein is A disintegrin and metalloproteinase with thrombospondin motifs 15 (ADAMTS15).